The sequence spans 223 residues: Translation initiation factor 6 (223 aa).

This sequence belongs to the eIF-6 family.

Binds to the 50S ribosomal subunit and prevents its association with the 30S ribosomal subunit to form the 70S initiation complex. This chain is Translation initiation factor 6, found in Saccharolobus islandicus (strain Y.N.15.51 / Yellowstone #2) (Sulfolobus islandicus).